The primary structure comprises 138 residues: DASH complex subunit DAD2 (138 aa).

Over residues 1–14 (MSGFSSRPLSTHLR) the composition is skewed to polar residues. Disordered regions lie at residues 1–25 (MSGFSSRPLSTHLRQPSLAPPQGQS) and 116–138 (PTEHAPALQAHAEGATEEESGRG).

It belongs to the DASH complex DAD2 family. Component of the DASH complex consisting of ASK1, DAD1, DAD2, DAD3, DAD4, DAM1, DUO1, HSK3, SPC19 and SPC34, with a stoichiometry of one copy of each subunit per complex. Multiple DASH complexes oligomerize to form a ring that encircles spindle microtubules and organizes the rod-like NDC80 complexes of the outer kinetochore. DASH complex oligomerization strengthens microtubule attachments. On cytoplasmic microtubules, DASH complexes appear to form patches instead of rings.

The protein localises to the chromosome. Its subcellular location is the centromere. It localises to the kinetochore. The protein resides in the cytoplasm. It is found in the cytoskeleton. The protein localises to the spindle. Its subcellular location is the nucleus. Its function is as follows. Component of the DASH complex that connects microtubules with kinetochores and couples microtubule depolymerisation to chromosome movement; it is involved in retrieving kinetochores to the spindle poles before their re-orientation on the spindle in early mitosis and allows microtubule depolymerization to pull chromosomes apart and resist detachment during anaphase. Kinetochores, consisting of a centromere-associated inner segment and a microtubule-contacting outer segment, play a crucial role in chromosome segregation by mediating the physical connection between centromeric DNA and microtubules. Kinetochores also serve as an input point for the spindle assembly checkpoint, which delays anaphase until all chromosomes have bioriented on the mitotic spindle. This Chaetomium thermophilum (strain DSM 1495 / CBS 144.50 / IMI 039719) (Thermochaetoides thermophila) protein is DASH complex subunit DAD2.